Here is a 190-residue protein sequence, read N- to C-terminus: Large ribosomal subunit protein bL25 (190 aa).

It belongs to the bacterial ribosomal protein bL25 family. CTC subfamily. As to quaternary structure, part of the 50S ribosomal subunit; part of the 5S rRNA/L5/L18/L25 subcomplex. Contacts the 5S rRNA. Binds to the 5S rRNA independently of L5 and L18.

In terms of biological role, this is one of the proteins that binds to the 5S RNA in the ribosome where it forms part of the central protuberance. The sequence is that of Large ribosomal subunit protein bL25 from Neisseria meningitidis serogroup C (strain 053442).